Here is an 880-residue protein sequence, read N- to C-terminus: Leucine--tRNA ligase (880 aa).

Residues Pro46–His56 carry the 'HIGH' region motif. The 'KMSKS' region signature appears at Lys638–Ser642. Position 641 (Lys641) interacts with ATP.

This sequence belongs to the class-I aminoacyl-tRNA synthetase family.

It is found in the cytoplasm. The enzyme catalyses tRNA(Leu) + L-leucine + ATP = L-leucyl-tRNA(Leu) + AMP + diphosphate. The polypeptide is Leucine--tRNA ligase (Stenotrophomonas maltophilia (strain R551-3)).